The following is a 341-amino-acid chain: NADH-quinone oxidoreductase subunit H 2 (341 aa).

8 helical membrane passes run 13 to 33 (IVVI…IAYI), 82 to 102 (GVFL…WAVI), 115 to 135 (VGVL…IMAG), 161 to 181 (IGFV…TAIV), 190 to 210 (VLGW…VSAL), 242 to 262 (LFVL…TILF), 277 to 297 (WVPG…MFAM), and 317 to 337 (VFLP…QFAG).

The protein belongs to the complex I subunit 1 family. NDH-1 is composed of 14 different subunits. Subunits NuoA, H, J, K, L, M, N constitute the membrane sector of the complex.

It is found in the cell inner membrane. It catalyses the reaction a quinone + NADH + 5 H(+)(in) = a quinol + NAD(+) + 4 H(+)(out). In terms of biological role, NDH-1 shuttles electrons from NADH, via FMN and iron-sulfur (Fe-S) centers, to quinones in the respiratory chain. The immediate electron acceptor for the enzyme in this species is believed to be ubiquinone. Couples the redox reaction to proton translocation (for every two electrons transferred, four hydrogen ions are translocated across the cytoplasmic membrane), and thus conserves the redox energy in a proton gradient. This subunit may bind ubiquinone. In Rhodopseudomonas palustris (strain HaA2), this protein is NADH-quinone oxidoreductase subunit H 2.